We begin with the raw amino-acid sequence, 122 residues long: Protein U68 (122 aa).

The protein belongs to the herpesviridae UL96 family.

The protein is Protein U68 of Elephas maximus (Indian elephant).